Here is a 466-residue protein sequence, read N- to C-terminus: Zinc metalloproteinase/disintegrin (466 aa).

The first 6 residues, 1–6 (FPYQGS), serve as a signal peptide directing secretion. The propeptide occupies 7–174 (SIILESGNVN…PIKKASQLIV (168 aa)). Residues 180–377 (RYMEIVIVVD…ENPPCILNKP (198 aa)) form the Peptidase M12B domain. Residues Glu183 and Asp267 each coordinate Ca(2+). 3 cysteine pairs are disulfide-bonded: Cys291-Cys372, Cys331-Cys356, and Cys333-Cys339. Position 316 (His316) interacts with Zn(2+). Glu317 is a catalytic residue. Zn(2+) contacts are provided by His320 and His326. Ca(2+) is bound by residues Cys372 and Asn375. A propeptide spanning residues 377-401 (PLRTDTVSTPVSGNELLEAGKDYDR) is cleaved from the precursor. Positions 385 to 466 (TPVSGNELLE…GDCPRNPYHA (82 aa)) constitute a Disintegrin domain. 3 disulfides stabilise this stretch: Cys422/Cys428, Cys427/Cys452, and Cys440/Cys459. Positions 444 to 446 (RGD) match the Cell attachment site motif.

Belongs to the venom metalloproteinase (M12B) family. P-II subfamily. P-IIa sub-subfamily. Monomer. Requires Zn(2+) as cofactor. Expressed by the venom gland.

It is found in the secreted. Impairs hemostasis in the envenomed animal. Its function is as follows. Inhibits platelet aggregation induced by ADP, thrombin, platelet-activating factor and collagen. Acts by inhibiting fibrinogen interaction with platelet receptors GPIIb/GPIIIa (ITGA2B/ITGB3). In Deinagkistrodon acutus (Hundred-pace snake), this protein is Zinc metalloproteinase/disintegrin.